Reading from the N-terminus, the 243-residue chain is Small ribosomal subunit protein uS3 (243 aa).

Residues 22 to 93 (LNEFLTRELA…SVELYAEKVA (72 aa)) form the KH type-2 domain. Residues 195–243 (QQGKNGPKKPQPDHILVTEPKDEPAPLEPTSDIRSLAPAPLPQPVAAVA) are disordered.

The protein belongs to the universal ribosomal protein uS3 family.

This Manduca sexta (Tobacco hawkmoth) protein is Small ribosomal subunit protein uS3 (RpS3).